Consider the following 351-residue polypeptide: Alanine racemase (351 aa).

Lys-34 serves as the catalytic Proton acceptor; specific for D-alanine. Residue Lys-34 is modified to N6-(pyridoxal phosphate)lysine. Arg-126 lines the substrate pocket. The active-site Proton acceptor; specific for L-alanine is the Tyr-248. Residue Met-296 participates in substrate binding.

It belongs to the alanine racemase family. The cofactor is pyridoxal 5'-phosphate.

It catalyses the reaction L-alanine = D-alanine. It functions in the pathway amino-acid biosynthesis; D-alanine biosynthesis; D-alanine from L-alanine: step 1/1. Catalyzes the interconversion of L-alanine and D-alanine. May also act on other amino acids. The chain is Alanine racemase (alr) from Deinococcus radiodurans (strain ATCC 13939 / DSM 20539 / JCM 16871 / CCUG 27074 / LMG 4051 / NBRC 15346 / NCIMB 9279 / VKM B-1422 / R1).